The sequence spans 611 residues: Translation initiation factor RLI1 (611 aa).

2 consecutive 4Fe-4S ferredoxin-type domains span residues 7–31 and 46–75; these read RVAI…SCPV and RIAF…IINL. 2 consecutive ABC transporter domains span residues 77 to 318 and 345 to 565; these read TNLE…FLDG and AEKS…LKNL. ATP-binding positions include 110–117 and 382–389; these read GTNGIGKS and GENGTGKT.

The protein belongs to the ABC transporter superfamily. ABCE family. In terms of assembly, component of the multifactor complex (MFC). The complex associates with pre-initiation complexes.

It is found in the cytoplasm. Its subcellular location is the nucleus. Its function is as follows. Component of the multifactor complex (MFC) involved in translation initiation. Required for the binding of MFC to the 40S ribosome. Required for the processing and nuclear export of the 60S and 40S ribosomal subunits. The chain is Translation initiation factor RLI1 (RLI1) from Chaetomium thermophilum (strain DSM 1495 / CBS 144.50 / IMI 039719) (Thermochaetoides thermophila).